The chain runs to 224 residues: Putative carbamate hydrolase RutD (224 aa).

The AB hydrolase-1 domain maps to 14-115 (PVVVLISGLG…TVLVSVNGWL (102 aa)).

This sequence belongs to the AB hydrolase superfamily. Hydrolase RutD family.

The enzyme catalyses carbamate + 2 H(+) = NH4(+) + CO2. Functionally, involved in pyrimidine catabolism. May facilitate the hydrolysis of carbamate, a reaction that can also occur spontaneously. This Shigella dysenteriae serotype 1 (strain Sd197) protein is Putative carbamate hydrolase RutD.